The primary structure comprises 203 residues: Ribonuclease HII (203 aa).

The RNase H type-2 domain maps to 15-201; that stretch reads LLVAGLDEAG…VAQAPLRFPE (187 aa). Residues aspartate 21, glutamate 22, and aspartate 111 each coordinate a divalent metal cation.

The protein belongs to the RNase HII family. Mn(2+) is required as a cofactor. Requires Mg(2+) as cofactor.

Its subcellular location is the cytoplasm. It catalyses the reaction Endonucleolytic cleavage to 5'-phosphomonoester.. In terms of biological role, endonuclease that specifically degrades the RNA of RNA-DNA hybrids. The polypeptide is Ribonuclease HII (Thermus thermophilus (strain ATCC 27634 / DSM 579 / HB8)).